The following is a 181-amino-acid chain: Protein Syd (181 aa).

This sequence belongs to the Syd family.

Its subcellular location is the cell inner membrane. In terms of biological role, interacts with the SecY protein in vivo. May bind preferentially to an uncomplexed state of SecY, thus functioning either as a chelating agent for excess SecY in the cell or as a regulatory factor that negatively controls the translocase function. The protein is Protein Syd of Escherichia coli O157:H7.